The primary structure comprises 197 residues: FMN-dependent NADH:quinone oxidoreductase (197 aa).

FMN is bound by residues Ser-10, 16–18, and 96–99; these read SKS and MYNF.

It belongs to the azoreductase type 1 family. In terms of assembly, homodimer. The cofactor is FMN.

It carries out the reaction 2 a quinone + NADH + H(+) = 2 a 1,4-benzosemiquinone + NAD(+). The enzyme catalyses N,N-dimethyl-1,4-phenylenediamine + anthranilate + 2 NAD(+) = 2-(4-dimethylaminophenyl)diazenylbenzoate + 2 NADH + 2 H(+). Functionally, quinone reductase that provides resistance to thiol-specific stress caused by electrophilic quinones. In terms of biological role, also exhibits azoreductase activity. Catalyzes the reductive cleavage of the azo bond in aromatic azo compounds to the corresponding amines. The polypeptide is FMN-dependent NADH:quinone oxidoreductase (Marinomonas sp. (strain MWYL1)).